We begin with the raw amino-acid sequence, 994 residues long: Sarcoplasmic/endoplasmic reticulum calcium ATPase 1 (994 aa).

Over Met1–Ser48 the chain is Cytoplasmic. The chain crosses the membrane as a helical span at residues Leu49 to Ala69. Residues Cys70 to Val89 are Lumenal-facing. The helical transmembrane segment at Glu90–Arg110 threads the bilayer. Residues Asn111–Leu253 lie on the Cytoplasmic side of the membrane. Residues Asp254 to Leu273 traverse the membrane as a helical segment. The Lumenal portion of the chain corresponds to Ile274–Tyr295. A helical membrane pass occupies residues Phe296–Ala313. Val304, Ala305, Ile307, and Glu309 together coordinate Ca(2+). Topologically, residues Val314 to Met757 are cytoplasmic. The active-site 4-aspartylphosphate intermediate is Asp351. Positions 351 and 353 each coordinate Mg(2+). An ATP-binding site is contributed by Thr353. Thr441 is subject to Phosphothreonine. ATP is bound by residues Glu442, Arg489, Lys515, and Arg560. At Thr569 the chain carries Phosphothreonine. The residue at position 581 (Ser581) is a Phosphoserine. ATP contacts are provided by Thr625, Gly626, and Asp627. Ser643 is modified (phosphoserine). 2 residues coordinate ATP: Arg678 and Lys684. A Mg(2+)-binding site is contributed by Asp703. An ATP-binding site is contributed by Asn706. A helical transmembrane segment spans residues Lys758–Leu777. Residues Asn768 and Glu771 each coordinate Ca(2+). Residues Thr778–Leu787 are Lumenal-facing. A helical membrane pass occupies residues Ile788 to Gly808. Positions Ile788 to Gly808 are interaction with PLN. Residues Asn796, Thr799, and Asp800 each coordinate Ca(2+). The Cytoplasmic segment spans residues Phe809–Leu828. The chain crosses the membrane as a helical span at residues Ile829–Ala851. Over Ala852–Met897 the chain is Lumenal. An intrachain disulfide couples Cys876 to Cys888. The chain crosses the membrane as a helical span at residues Thr898–Ser917. Glu908 contacts Ca(2+). Residues Glu918–Asn930 are Cytoplasmic-facing. The chain crosses the membrane as a helical span at residues Ile931–Tyr949. The segment at Trp932 to Leu943 is interaction with PLN. Residues Val950 to Phe964 are Lumenal-facing. A helical membrane pass occupies residues Thr965–Lys985. The Cytoplasmic segment spans residues Phe986 to Gly994.

The protein belongs to the cation transport ATPase (P-type) (TC 3.A.3) family. Type IIA subfamily. Interacts with sarcolipin (SLN). Interacts with phospholamban (PLN). Interacts with myoregulin (MRLN). Interacts with DWORF. Interacts with VMP1. It depends on Mg(2+) as a cofactor.

It localises to the endoplasmic reticulum membrane. It is found in the sarcoplasmic reticulum membrane. It catalyses the reaction Ca(2+)(in) + ATP + H2O = Ca(2+)(out) + ADP + phosphate + H(+). Inhibited by sarcolipin (SLN) and myoregulin (MRLN). Has also been shown to be reversibly inhibited by phospholamban (PLN) at low calcium concentrations in vitro. Dephosphorylated PLN decreases the apparent affinity of the ATPase for calcium in vitro and this inhibition is regulated by the phosphorylation of PLN. Enhanced by DWORF; DWORF increases activity by displacing sarcolipin (SLN), phospholamban (PLN) and myoregulin (MRLN). Functionally, key regulator of striated muscle performance by acting as the major Ca(2+) ATPase responsible for the reuptake of cytosolic Ca(2+) into the sarcoplasmic reticulum. Catalyzes the hydrolysis of ATP coupled with the translocation of calcium from the cytosol to the sarcoplasmic reticulum lumen. Contributes to calcium sequestration involved in muscular excitation/contraction. The polypeptide is Sarcoplasmic/endoplasmic reticulum calcium ATPase 1 (Atp2a1) (Mus musculus (Mouse)).